The primary structure comprises 142 residues: Probable signal recognition particle 19 kDa protein (142 aa).

The tract at residues 115–142 is disordered; it reads KTRQPGYTAPSVASSSAAAAGKKNKKKK. The segment covering 123-135 has biased composition (low complexity); that stretch reads APSVASSSAAAAG.

This sequence belongs to the SRP19 family. As to quaternary structure, component of a signal recognition particle complex that consists of a 7SL RNA molecule of 300 nucleotides and six protein subunits: srpa-72, srpa-68, SRP54, F37F2.2/SRP19, F25G6.8/SRP14 and ZK512.4/SRP9.

It is found in the cytoplasm. The protein resides in the nucleus. It localises to the nucleolus. Component of the signal recognition particle (SRP) complex, a ribonucleoprotein complex that mediates the cotranslational targeting of secretory and membrane proteins to the endoplasmic reticulum (ER). Binds directly to 7SL RNA. Mediates binding of SRP54 to the SRP complex. This Caenorhabditis elegans protein is Probable signal recognition particle 19 kDa protein.